Reading from the N-terminus, the 395-residue chain is Sensor protein DltS (395 aa).

2 consecutive transmembrane segments (helical) span residues 9 to 29 (FVFLTMSILIVVVLFLFAVSN) and 136 to 156 (FLILVFTIFGFCLLAAVSLYL). Residues 177-387 (DASHELKTPI…RLEVQLPIDG (211 aa)) enclose the Histidine kinase domain. At H180 the chain carries Phosphohistidine; by autocatalysis.

Its subcellular location is the cell membrane. It carries out the reaction ATP + protein L-histidine = ADP + protein N-phospho-L-histidine.. In terms of biological role, member of the two-component regulatory system DltS/DltR. Regulates the expression of the dlt operon. Probably phosphorylates DltR. The chain is Sensor protein DltS (dltS) from Streptococcus agalactiae serotype V (strain ATCC BAA-611 / 2603 V/R).